The primary structure comprises 346 residues: Ribonucleoside-diphosphate reductase subunit beta (346 aa).

Fe cation is bound by residues Glu-89, Glu-120, and His-123. The active site involves Tyr-129. Fe cation-binding residues include Glu-193, Glu-227, and His-230.

This sequence belongs to the ribonucleoside diphosphate reductase small chain family. Tetramer of two alpha and two beta subunits. It depends on Fe cation as a cofactor.

It catalyses the reaction a 2'-deoxyribonucleoside 5'-diphosphate + [thioredoxin]-disulfide + H2O = a ribonucleoside 5'-diphosphate + [thioredoxin]-dithiol. Functionally, provides the precursors necessary for DNA synthesis. Catalyzes the biosynthesis of deoxyribonucleotides from the corresponding ribonucleotides. This Chlamydia pneumoniae (Chlamydophila pneumoniae) protein is Ribonucleoside-diphosphate reductase subunit beta (nrdB).